Consider the following 351-residue polypeptide: Anthranilate phosphoribosyltransferase (351 aa).

Residues Gly85, 88-89 (GD), Ser93, 95-98 (NIST), 113-121 (KHGNRAASS), and Thr125 contribute to the 5-phospho-alpha-D-ribose 1-diphosphate site. An anthranilate-binding site is contributed by Gly85. A Mg(2+)-binding site is contributed by Ser97. Position 116 (Asn116) interacts with anthranilate. Residue Arg171 participates in anthranilate binding. Positions 229 and 230 each coordinate Mg(2+).

This sequence belongs to the anthranilate phosphoribosyltransferase family. Homodimer. Mg(2+) serves as cofactor.

It catalyses the reaction N-(5-phospho-beta-D-ribosyl)anthranilate + diphosphate = 5-phospho-alpha-D-ribose 1-diphosphate + anthranilate. Its pathway is amino-acid biosynthesis; L-tryptophan biosynthesis; L-tryptophan from chorismate: step 2/5. Its function is as follows. Catalyzes the transfer of the phosphoribosyl group of 5-phosphorylribose-1-pyrophosphate (PRPP) to anthranilate to yield N-(5'-phosphoribosyl)-anthranilate (PRA). In Saccharopolyspora erythraea (strain ATCC 11635 / DSM 40517 / JCM 4748 / NBRC 13426 / NCIMB 8594 / NRRL 2338), this protein is Anthranilate phosphoribosyltransferase.